The sequence spans 281 residues: Ribosomal RNA small subunit methyltransferase A (281 aa).

S-adenosyl-L-methionine contacts are provided by N21, L23, G48, E69, D92, and N113.

This sequence belongs to the class I-like SAM-binding methyltransferase superfamily. rRNA adenine N(6)-methyltransferase family. RsmA subfamily.

The protein resides in the cytoplasm. It carries out the reaction adenosine(1518)/adenosine(1519) in 16S rRNA + 4 S-adenosyl-L-methionine = N(6)-dimethyladenosine(1518)/N(6)-dimethyladenosine(1519) in 16S rRNA + 4 S-adenosyl-L-homocysteine + 4 H(+). Functionally, specifically dimethylates two adjacent adenosines (A1518 and A1519) in the loop of a conserved hairpin near the 3'-end of 16S rRNA in the 30S particle. May play a critical role in biogenesis of 30S subunits. In Ralstonia nicotianae (strain ATCC BAA-1114 / GMI1000) (Ralstonia solanacearum), this protein is Ribosomal RNA small subunit methyltransferase A.